The following is a 283-amino-acid chain: Bifunctional protein FolD (283 aa).

Residues 165-167, Ser190, and Val231 contribute to the NADP(+) site; that span reads GRS.

It belongs to the tetrahydrofolate dehydrogenase/cyclohydrolase family. Homodimer.

The catalysed reaction is (6R)-5,10-methylene-5,6,7,8-tetrahydrofolate + NADP(+) = (6R)-5,10-methenyltetrahydrofolate + NADPH. The enzyme catalyses (6R)-5,10-methenyltetrahydrofolate + H2O = (6R)-10-formyltetrahydrofolate + H(+). Its pathway is one-carbon metabolism; tetrahydrofolate interconversion. Functionally, catalyzes the oxidation of 5,10-methylenetetrahydrofolate to 5,10-methenyltetrahydrofolate and then the hydrolysis of 5,10-methenyltetrahydrofolate to 10-formyltetrahydrofolate. The sequence is that of Bifunctional protein FolD from Bacillus pumilus (strain SAFR-032).